The following is an 87-amino-acid chain: RNA-binding protein Hfq (87 aa).

Residues 9-68 (DPFLNALRRERIPVSIYLVNGIKLQGQIESFDQFVILLKNTVNQMVYKHAISTVVPARPV) enclose the Sm domain. A disordered region spans residues 65-87 (ARPVSHHSGDRPASDRPAEKSEE). The span at 71–87 (HSGDRPASDRPAEKSEE) shows a compositional bias: basic and acidic residues.

The protein belongs to the Hfq family.

In terms of biological role, RNA chaperone that binds small regulatory RNA (sRNAs) and mRNAs to facilitate mRNA translational regulation in response to envelope stress, environmental stress and changes in metabolite concentrations. Also binds with high specificity to tRNAs. Essential for virulence in the suckling mouse model of cholera pathogenesis. The protein is RNA-binding protein Hfq of Vibrio cholerae serotype O1 (strain ATCC 39315 / El Tor Inaba N16961).